Consider the following 345-residue polypeptide: Holliday junction branch migration complex subunit RuvB (345 aa).

Positions Met1–Tyr186 are large ATPase domain (RuvB-L). ATP is bound by residues Leu25, Arg26, Gly67, Lys70, Thr71, Ser72, Glu133–Phe135, Arg176, Tyr186, and Arg223. A Mg(2+)-binding site is contributed by Thr71. The small ATPAse domain (RuvB-S) stretch occupies residues Glu187–Asp257. A head domain (RuvB-H) region spans residues Glu260–Glu345. Residues Arg315 and Arg320 each coordinate DNA.

The protein belongs to the RuvB family. As to quaternary structure, homohexamer. Forms an RuvA(8)-RuvB(12)-Holliday junction (HJ) complex. HJ DNA is sandwiched between 2 RuvA tetramers; dsDNA enters through RuvA and exits via RuvB. An RuvB hexamer assembles on each DNA strand where it exits the tetramer. Each RuvB hexamer is contacted by two RuvA subunits (via domain III) on 2 adjacent RuvB subunits; this complex drives branch migration. In the full resolvosome a probable DNA-RuvA(4)-RuvB(12)-RuvC(2) complex forms which resolves the HJ.

It localises to the cytoplasm. The catalysed reaction is ATP + H2O = ADP + phosphate + H(+). In terms of biological role, the RuvA-RuvB-RuvC complex processes Holliday junction (HJ) DNA during genetic recombination and DNA repair, while the RuvA-RuvB complex plays an important role in the rescue of blocked DNA replication forks via replication fork reversal (RFR). RuvA specifically binds to HJ cruciform DNA, conferring on it an open structure. The RuvB hexamer acts as an ATP-dependent pump, pulling dsDNA into and through the RuvAB complex. RuvB forms 2 homohexamers on either side of HJ DNA bound by 1 or 2 RuvA tetramers; 4 subunits per hexamer contact DNA at a time. Coordinated motions by a converter formed by DNA-disengaged RuvB subunits stimulates ATP hydrolysis and nucleotide exchange. Immobilization of the converter enables RuvB to convert the ATP-contained energy into a lever motion, pulling 2 nucleotides of DNA out of the RuvA tetramer per ATP hydrolyzed, thus driving DNA branch migration. The RuvB motors rotate together with the DNA substrate, which together with the progressing nucleotide cycle form the mechanistic basis for DNA recombination by continuous HJ branch migration. Branch migration allows RuvC to scan DNA until it finds its consensus sequence, where it cleaves and resolves cruciform DNA. This is Holliday junction branch migration complex subunit RuvB from Mycobacterium marinum (strain ATCC BAA-535 / M).